A 482-amino-acid polypeptide reads, in one-letter code: Membrane-bound lytic murein transglycosylase F (482 aa).

A signal peptide spans 1-18; the sequence is MKGLFLRIITALALLFWA. The non-LT domain stretch occupies residues 19-267; it reads IDMVFPWQFL…NLKEKYLGHI (249 aa). The tract at residues 268-482 is LT domain; it reads SQFDYVDTRS…NLEEIKENED (215 aa). Residue E312 is part of the active site. A compositionally biased stretch (polar residues) spans 457–470; it reads ENQTTNDNANNESA. Positions 457 to 482 are disordered; sequence ENQTTNDNANNESAVKNLEEIKENED. The segment covering 473-482 has biased composition (basic and acidic residues); the sequence is NLEEIKENED.

It in the N-terminal section; belongs to the bacterial solute-binding protein 3 family. In the C-terminal section; belongs to the transglycosylase Slt family.

It is found in the cell outer membrane. The enzyme catalyses Exolytic cleavage of the (1-&gt;4)-beta-glycosidic linkage between N-acetylmuramic acid (MurNAc) and N-acetylglucosamine (GlcNAc) residues in peptidoglycan, from either the reducing or the non-reducing ends of the peptidoglycan chains, with concomitant formation of a 1,6-anhydrobond in the MurNAc residue.. Its function is as follows. Murein-degrading enzyme that degrades murein glycan strands and insoluble, high-molecular weight murein sacculi, with the concomitant formation of a 1,6-anhydromuramoyl product. Lytic transglycosylases (LTs) play an integral role in the metabolism of the peptidoglycan (PG) sacculus. Their lytic action creates space within the PG sacculus to allow for its expansion as well as for the insertion of various structures such as secretion systems and flagella. This Haemophilus influenzae (strain PittGG) protein is Membrane-bound lytic murein transglycosylase F.